The chain runs to 266 residues: 5'-nucleotidase SurE (266 aa).

Positions 10, 11, 41, and 97 each coordinate a divalent metal cation.

Belongs to the SurE nucleotidase family. A divalent metal cation serves as cofactor.

The protein localises to the cytoplasm. It catalyses the reaction a ribonucleoside 5'-phosphate + H2O = a ribonucleoside + phosphate. In terms of biological role, nucleotidase that shows phosphatase activity on nucleoside 5'-monophosphates. The polypeptide is 5'-nucleotidase SurE (Methanocella arvoryzae (strain DSM 22066 / NBRC 105507 / MRE50)).